The following is a 161-amino-acid chain: Small ribosomal subunit protein uS9 (161 aa).

Belongs to the universal ribosomal protein uS9 family.

In Rickettsia prowazekii (strain Madrid E), this protein is Small ribosomal subunit protein uS9 (rpsI).